The following is a 768-amino-acid chain: Solute carrier family 45 member 4 (768 aa).

The disordered stretch occupies residues 1-32 (MKMAPQNADPESMQVQELSVPLPDPQKAGGAE). The next 6 helical transmembrane spans lie at 63-83 (EFCY…IGLP), 86-106 (YYSL…PLIG), 123-143 (ILAL…GSAI), 155-175 (PIGI…ADAT), 196-216 (LNIH…LGGL), and 233-253 (VLFF…LFSI). Disordered stretches follow at residues 259–284 (SPQQ…PAFP) and 379–419 (NEAK…RHAF). A phosphoserine mark is found at S424 and S454. The segment at 460–489 (DMQKRQRQHRHRNQSGATTSSGDTESEEGE) is disordered. Residues 473-482 (QSGATTSSGD) show a composition bias toward low complexity. At S485 the chain carries Phosphoserine. Transmembrane regions (helical) follow at residues 518-538 (TWFS…QVIF), 560-580 (MGCW…ALLQ), 592-612 (VIYV…AMFP), 614-634 (VYVA…ISYC), 666-686 (ILSC…GGVV), and 695-715 (IPMV…FLVI). The interval 726 to 768 (EQKGLSSPLAGEGRAGGNSEKPTVLKLTRKEGLQGPVETESVV) is disordered. S732 is modified (phosphoserine).

Belongs to the glycoside-pentoside-hexuronide (GPH) cation symporter transporter (TC 2.A.2) family.

The protein resides in the membrane. The enzyme catalyses sucrose(out) + H(+)(out) = sucrose(in) + H(+)(in). Its function is as follows. Proton-associated sucrose transporter. May be able to transport also glucose and fructose. The protein is Solute carrier family 45 member 4 of Homo sapiens (Human).